We begin with the raw amino-acid sequence, 228 residues long: Probable endo-1,4-beta-xylanase A (228 aa).

Positions 1 to 18 are cleaved as a signal peptide; sequence MVSFSYLLLACSAIGALA. N-linked (GlcNAc...) asparagine glycosylation is present at asparagine 29. Positions 40-228 constitute a GH11 domain; it reads AGTPSSTGWN…SSGSASITVY (189 aa). Glutamate 124 (nucleophile) is an active-site residue. Glutamate 215 (proton donor) is an active-site residue.

The protein belongs to the glycosyl hydrolase 11 (cellulase G) family.

The protein resides in the secreted. It catalyses the reaction Endohydrolysis of (1-&gt;4)-beta-D-xylosidic linkages in xylans.. It functions in the pathway glycan degradation; xylan degradation. Functionally, endo-1,4-beta-xylanase involved in the hydrolysis of xylan, a major structural heterogeneous polysaccharide found in plant biomass representing the second most abundant polysaccharide in the biosphere, after cellulose. This Aspergillus fumigatus (strain CBS 144.89 / FGSC A1163 / CEA10) (Neosartorya fumigata) protein is Probable endo-1,4-beta-xylanase A (xlnA).